Reading from the N-terminus, the 110-residue chain is Inner kinetochore subunit mhf1 (110 aa).

It belongs to the TAF9 family. CENP-S/MHF1 subfamily. As to quaternary structure, the MHF histone-fold complex is a heterotetramer of 2 mhf1-mhf2 heterodimers. Component of the inner kinetochore constitutive centromere-associated network (CCAN) (also known as central kinetochore Sim4 complex in fission yeast), which is composed of at least cnl2, cnp3, cnp20, fta1, fta2, fta3, fta4, fta6, fta7, mal2, mhf1, mhf2, mis6, mis15, mis17, sim4 and wip1.

The protein localises to the nucleus. In terms of biological role, component of a FANCM-MHF complex that promotes gene conversion at blocked replication forks, probably by reversal of the stalled fork. FANCM-MHF promotes non-crossover recombination. The polypeptide is Inner kinetochore subunit mhf1 (Schizosaccharomyces pombe (strain 972 / ATCC 24843) (Fission yeast)).